Consider the following 465-residue polypeptide: Cysteine--tRNA ligase (465 aa).

Zn(2+) is bound at residue Cys27. A 'HIGH' region motif is present at residues 29–39 (PTVYNFFHIGN). Cys207, His232, and Glu236 together coordinate Zn(2+). Residues 264–268 (KMSKS) carry the 'KMSKS' region motif. Lys267 is an ATP binding site.

It belongs to the class-I aminoacyl-tRNA synthetase family. In terms of assembly, monomer. It depends on Zn(2+) as a cofactor.

It localises to the cytoplasm. The catalysed reaction is tRNA(Cys) + L-cysteine + ATP = L-cysteinyl-tRNA(Cys) + AMP + diphosphate. The chain is Cysteine--tRNA ligase from Clostridium botulinum (strain 657 / Type Ba4).